The chain runs to 142 residues: HTH-type transcriptional regulator MntR (142 aa).

Positions methionine 1–threonine 63 constitute an HTH dtxR-type domain. Mn(2+) contacts are provided by aspartate 8, glutamate 11, histidine 77, glutamate 99, glutamate 102, and histidine 103.

This sequence belongs to the DtxR/MntR family. In terms of assembly, homodimer.

It is found in the cytoplasm. DNA binding is strongly activated by Mn(2+). Its function is as follows. Central regulator of manganese homeostasis. This chain is HTH-type transcriptional regulator MntR, found in Bacillus velezensis (strain DSM 23117 / BGSC 10A6 / LMG 26770 / FZB42) (Bacillus amyloliquefaciens subsp. plantarum).